The primary structure comprises 371 residues: Queuine tRNA-ribosyltransferase (371 aa).

Asp90 serves as the catalytic Proton acceptor. Substrate-binding positions include 90–94 (DSGGF), Asp144, Gln188, and Gly215. Positions 246 to 252 (GVGTPED) are RNA binding. Asp265 functions as the Nucleophile in the catalytic mechanism. Positions 270 to 274 (TRNAR) are RNA binding; important for wobble base 34 recognition. Zn(2+) is bound by residues Cys303, Cys305, Cys308, and His334.

This sequence belongs to the queuine tRNA-ribosyltransferase family. Homodimer. Within each dimer, one monomer is responsible for RNA recognition and catalysis, while the other monomer binds to the replacement base PreQ1. Zn(2+) serves as cofactor.

The enzyme catalyses 7-aminomethyl-7-carbaguanine + guanosine(34) in tRNA = 7-aminomethyl-7-carbaguanosine(34) in tRNA + guanine. It functions in the pathway tRNA modification; tRNA-queuosine biosynthesis. Its function is as follows. Catalyzes the base-exchange of a guanine (G) residue with the queuine precursor 7-aminomethyl-7-deazaguanine (PreQ1) at position 34 (anticodon wobble position) in tRNAs with GU(N) anticodons (tRNA-Asp, -Asn, -His and -Tyr). Catalysis occurs through a double-displacement mechanism. The nucleophile active site attacks the C1' of nucleotide 34 to detach the guanine base from the RNA, forming a covalent enzyme-RNA intermediate. The proton acceptor active site deprotonates the incoming PreQ1, allowing a nucleophilic attack on the C1' of the ribose to form the product. After dissociation, two additional enzymatic reactions on the tRNA convert PreQ1 to queuine (Q), resulting in the hypermodified nucleoside queuosine (7-(((4,5-cis-dihydroxy-2-cyclopenten-1-yl)amino)methyl)-7-deazaguanosine). This is Queuine tRNA-ribosyltransferase from Neisseria gonorrhoeae (strain NCCP11945).